The primary structure comprises 375 residues: Amylovoran biosynthesis protein AmsC (375 aa).

A run of 9 helical transmembrane segments spans residues 2–22, 31–51, 93–113, 162–182, 208–228, 256–276, 287–307, 309–329, and 337–357; these read AIYW…LAMI, KILI…FAGI, MVLA…LLFI, IAFI…FIVL, LPLV…KKLF, VFGL…LYYF, VYIL…FSDF, IFGG…FAFL, and LLNF…NTIL.

The protein resides in the cell membrane. It participates in glycan metabolism; exopolysaccharide biosynthesis. Involved in the biosynthesis of amylovoran which functions as a virulence factor. This Erwinia amylovora (Fire blight bacteria) protein is Amylovoran biosynthesis protein AmsC (amsC).